Reading from the N-terminus, the 188-residue chain is Probable DNA-directed RNA polymerase subunit delta (188 aa).

The HTH HARE-type domain occupies 14 to 83 (LSMIEVARAI…GENKWGLRSW (70 aa)). Positions 119 to 188 (EDAIDYSADD…EDEEDEEEEE (70 aa)) are disordered.

It belongs to the RpoE family. As to quaternary structure, RNAP is composed of a core of 2 alpha, a beta and a beta' subunits. The core is associated with a delta subunit and one of several sigma factors.

In terms of biological role, participates in both the initiation and recycling phases of transcription. In the presence of the delta subunit, RNAP displays an increased specificity of transcription, a decreased affinity for nucleic acids, and an increased efficiency of RNA synthesis because of enhanced recycling. This Streptococcus equi subsp. equi (strain 4047) protein is Probable DNA-directed RNA polymerase subunit delta.